A 478-amino-acid polypeptide reads, in one-letter code: ATP synthase subunit beta (478 aa).

151–158 serves as a coordination point for ATP; it reads GGAGVGKT.

This sequence belongs to the ATPase alpha/beta chains family. As to quaternary structure, F-type ATPases have 2 components, CF(1) - the catalytic core - and CF(0) - the membrane proton channel. CF(1) has five subunits: alpha(3), beta(3), gamma(1), delta(1), epsilon(1). CF(0) has three main subunits: a(1), b(2) and c(9-12). The alpha and beta chains form an alternating ring which encloses part of the gamma chain. CF(1) is attached to CF(0) by a central stalk formed by the gamma and epsilon chains, while a peripheral stalk is formed by the delta and b chains.

The protein localises to the cell inner membrane. It carries out the reaction ATP + H2O + 4 H(+)(in) = ADP + phosphate + 5 H(+)(out). Its function is as follows. Produces ATP from ADP in the presence of a proton gradient across the membrane. The catalytic sites are hosted primarily by the beta subunits. The chain is ATP synthase subunit beta from Azorhizobium caulinodans (strain ATCC 43989 / DSM 5975 / JCM 20966 / LMG 6465 / NBRC 14845 / NCIMB 13405 / ORS 571).